Consider the following 499-residue polypeptide: Lysine--tRNA ligase (499 aa).

The Mg(2+) site is built by Glu408 and Glu415.

Belongs to the class-II aminoacyl-tRNA synthetase family. As to quaternary structure, homodimer. Mg(2+) is required as a cofactor.

It localises to the cytoplasm. It carries out the reaction tRNA(Lys) + L-lysine + ATP = L-lysyl-tRNA(Lys) + AMP + diphosphate. The chain is Lysine--tRNA ligase from Bacillus thuringiensis (strain Al Hakam).